A 262-amino-acid polypeptide reads, in one-letter code: Acyl-[acyl-carrier-protein]--UDP-N-acetylglucosamine O-acyltransferase (262 aa).

It belongs to the transferase hexapeptide repeat family. LpxA subfamily. In terms of assembly, homotrimer.

The protein localises to the cytoplasm. It catalyses the reaction a (3R)-hydroxyacyl-[ACP] + UDP-N-acetyl-alpha-D-glucosamine = a UDP-3-O-[(3R)-3-hydroxyacyl]-N-acetyl-alpha-D-glucosamine + holo-[ACP]. It functions in the pathway glycolipid biosynthesis; lipid IV(A) biosynthesis; lipid IV(A) from (3R)-3-hydroxytetradecanoyl-[acyl-carrier-protein] and UDP-N-acetyl-alpha-D-glucosamine: step 1/6. Functionally, involved in the biosynthesis of lipid A, a phosphorylated glycolipid that anchors the lipopolysaccharide to the outer membrane of the cell. The polypeptide is Acyl-[acyl-carrier-protein]--UDP-N-acetylglucosamine O-acyltransferase (Photorhabdus laumondii subsp. laumondii (strain DSM 15139 / CIP 105565 / TT01) (Photorhabdus luminescens subsp. laumondii)).